The following is a 290-amino-acid chain: Probable branched-chain-amino-acid aminotransferase (290 aa).

Lysine 155 carries the post-translational modification N6-(pyridoxal phosphate)lysine.

It belongs to the class-IV pyridoxal-phosphate-dependent aminotransferase family. Pyridoxal 5'-phosphate is required as a cofactor.

It catalyses the reaction L-leucine + 2-oxoglutarate = 4-methyl-2-oxopentanoate + L-glutamate. It carries out the reaction L-isoleucine + 2-oxoglutarate = (S)-3-methyl-2-oxopentanoate + L-glutamate. The catalysed reaction is L-valine + 2-oxoglutarate = 3-methyl-2-oxobutanoate + L-glutamate. It functions in the pathway amino-acid biosynthesis; L-isoleucine biosynthesis; L-isoleucine from 2-oxobutanoate: step 4/4. It participates in amino-acid biosynthesis; L-leucine biosynthesis; L-leucine from 3-methyl-2-oxobutanoate: step 4/4. The protein operates within amino-acid biosynthesis; L-valine biosynthesis; L-valine from pyruvate: step 4/4. Its function is as follows. Acts on leucine, isoleucine and valine. The sequence is that of Probable branched-chain-amino-acid aminotransferase (ilvE) from Rickettsia conorii (strain ATCC VR-613 / Malish 7).